Consider the following 425-residue polypeptide: Serine--tRNA ligase (425 aa).

An L-serine-binding site is contributed by threonine 233–glutamate 235. Arginine 264–glutamate 266 is a binding site for ATP. L-serine is bound at residue glutamate 287. Glutamate 351–serine 354 contacts ATP. Serine 387 is a binding site for L-serine.

The protein belongs to the class-II aminoacyl-tRNA synthetase family. Type-1 seryl-tRNA synthetase subfamily. Homodimer. The tRNA molecule binds across the dimer.

The protein localises to the cytoplasm. The enzyme catalyses tRNA(Ser) + L-serine + ATP = L-seryl-tRNA(Ser) + AMP + diphosphate + H(+). The catalysed reaction is tRNA(Sec) + L-serine + ATP = L-seryl-tRNA(Sec) + AMP + diphosphate + H(+). It participates in aminoacyl-tRNA biosynthesis; selenocysteinyl-tRNA(Sec) biosynthesis; L-seryl-tRNA(Sec) from L-serine and tRNA(Sec): step 1/1. Functionally, catalyzes the attachment of serine to tRNA(Ser). Is also able to aminoacylate tRNA(Sec) with serine, to form the misacylated tRNA L-seryl-tRNA(Sec), which will be further converted into selenocysteinyl-tRNA(Sec). This chain is Serine--tRNA ligase, found in Clostridium botulinum (strain Alaska E43 / Type E3).